Consider the following 382-residue polypeptide: SOX domain-containing protein dichaete (382 aa).

2 disordered regions span residues glycine 53–isoleucine 142 and tyrosine 346–tyrosine 382. A compositionally biased stretch (gly residues) spans alanine 60–glycine 69. A compositionally biased stretch (low complexity) spans asparagine 96–glycine 123. Residues isoleucine 142–lysine 210 constitute a DNA-binding region (HMG box). Over residues proline 347–threonine 360 the composition is skewed to low complexity.

In terms of tissue distribution, initially expressed in a pair-rule-like pattern which is rapidly replaced by strong neuroectoderm expression.

It localises to the nucleus. Its function is as follows. Essential for segmentation and CNS development. May modulate the actions of other transcription factors, including gap and pair-rule proteins. The polypeptide is SOX domain-containing protein dichaete (D) (Drosophila melanogaster (Fruit fly)).